A 147-amino-acid polypeptide reads, in one-letter code: uncharacterized protein (147 aa).

The disordered stretch occupies residues 1–37 (MVALFKSSLGRPEQHQTPQIRISPASSNVEHSEKQPR). The segment covering 15–29 (HQTPQIRISPASSNV) has biased composition (polar residues). The region spanning 71–147 (PIPVTKEELA…LKTSFVGFLV (77 aa)) is the Cytochrome b5 heme-binding domain. His-106 and His-129 together coordinate heme.

The protein belongs to the cytochrome b5 family.

This is an uncharacterized protein from Schizosaccharomyces pombe (strain 972 / ATCC 24843) (Fission yeast).